Reading from the N-terminus, the 403-residue chain is MKLPVSILFFISVSQILAFNNVIVTQKEVEIGVGETASITFQIKNHTSSTLNQTRIQLSQSPYITNPDVVLVDNWWANVTVSGERPVAGEILEALNCTTDGEEVCSLDLLDAYSRITVIRSHWLAILIQIVGWTYFAAWSVSFYPQMYLNFKRKSVVGLNFDFLSLNLVGFGAYAMFNLLMYYNSHVKNIYSMENPRSPPPVLLNDVVFAVHAFLACFVTILQCIFYERDQQRISTKCIILIIGLVSFGFVSVVVTVLNKITILDFVVSLSYIKMAVTCCKYFPQAYFNYQRKSTVGWSIGNILLDFTGGSLDILQMVLQAINVNDWSAFYANPVKFGLGFVSIFFDIIFMIQHYALYPDAEVPHNEYHGVDNPDPDSIVRDAEHGAADNESMESTDPIIVHD.

Residues 1–122 (MKLPVSILFF…YSRITVIRSH (122 aa)) are Lumenal-facing. N-linked (GlcNAc...) asparagine glycosylation is found at Asn-45, Asn-52, Asn-78, and Asn-96. A helical membrane pass occupies residues 123 to 143 (WLAILIQIVGWTYFAAWSVSF). The 67-residue stretch at 124–190 (LAILIQIVGW…MYYNSHVKNI (67 aa)) folds into the PQ-loop 1 domain. Residues 144–162 (YPQMYLNFKRKSVVGLNFD) are Cytoplasmic-facing. The helical transmembrane segment at 163-183 (FLSLNLVGFGAYAMFNLLMYY) threads the bilayer. Residues 184–206 (NSHVKNIYSMENPRSPPPVLLND) lie on the Lumenal side of the membrane. Residues 207 to 227 (VVFAVHAFLACFVTILQCIFY) traverse the membrane as a helical segment. The Cytoplasmic segment spans residues 228–237 (ERDQQRISTK). A helical transmembrane segment spans residues 238–258 (CIILIIGLVSFGFVSVVVTVL). The Lumenal segment spans residues 259 to 260 (NK). Residues 261–283 (ITILDFVVSLSYIKMAVTCCKYF) form a helical membrane-spanning segment. Residues 266 to 326 (FVVSLSYIKM…MVLQAINVND (61 aa)) form the PQ-loop 2 domain. Residues 284–294 (PQAYFNYQRKS) lie on the Cytoplasmic side of the membrane. A helical membrane pass occupies residues 295–315 (TVGWSIGNILLDFTGGSLDIL). The Lumenal segment spans residues 316 to 336 (QMVLQAINVNDWSAFYANPVK). Residues 337–357 (FGLGFVSIFFDIIFMIQHYAL) traverse the membrane as a helical segment. At 358 to 403 (YPDAEVPHNEYHGVDNPDPDSIVRDAEHGAADNESMESTDPIIVHD) the chain is on the cytoplasmic side. The segment covering 374–388 (PDPDSIVRDAEHGAA) has biased composition (basic and acidic residues). Residues 374-403 (PDPDSIVRDAEHGAADNESMESTDPIIVHD) are disordered.

Belongs to the cystinosin family.

It is found in the lysosome membrane. The protein localises to the cytoplasmic vesicle. It localises to the phagosome. The enzyme catalyses L-cystine(out) + H(+)(out) = L-cystine(in) + H(+)(in). Its function is as follows. Cystine/H(+) symporter that mediates export of cystine, the oxidized dimer of cysteine, from lysosomes. May play a role in the degradation of engulfed apoptotic cells. The polypeptide is Cystinosin homolog (ctns-1) (Caenorhabditis briggsae).